A 23-amino-acid chain; its full sequence is Defensin-like protein 2 (23 aa).

Q1 carries the pyrrolidone carboxylic acid modification.

Belongs to the DEFL family. As to quaternary structure, forms oligomers in its native state.

Possesses antifungal activity sensitive to inorganic cations. In Brassica napus (Rape), this protein is Defensin-like protein 2.